A 195-amino-acid chain; its full sequence is dTTP/UTP pyrophosphatase (195 aa).

The active-site Proton acceptor is the aspartate 77.

The protein belongs to the Maf family. YhdE subfamily. The cofactor is a divalent metal cation.

It localises to the cytoplasm. It carries out the reaction dTTP + H2O = dTMP + diphosphate + H(+). It catalyses the reaction UTP + H2O = UMP + diphosphate + H(+). Its function is as follows. Nucleoside triphosphate pyrophosphatase that hydrolyzes dTTP and UTP. May have a dual role in cell division arrest and in preventing the incorporation of modified nucleotides into cellular nucleic acids. The sequence is that of dTTP/UTP pyrophosphatase from Flavobacterium psychrophilum (strain ATCC 49511 / DSM 21280 / CIP 103535 / JIP02/86).